A 419-amino-acid polypeptide reads, in one-letter code: MTTQLEQAWELAKQRFAAVGIDVEEALRQLDRLPVSMHCWQGDDVSGFENPEGSLTGGIQATGNYPGKARNASELRADLEQAMRLIPGPKRLNLHAIYLESDTPVSRDQIKPEHFKNWGEWAKANQLGLDFNPSCFSHPLSADGFTLSHPDDSIRQFWIDHCKASRRVSAYFGEQLGTPSVMNIWIPDGMKDITVDRLAPRQRLLAALDEVISKKLNPAHHIDAVESKLFGIGAESYTVGSNEFYMGYATSRQTALCLDAGHFHPTEVISDKISAAMLYVPQLLLHVSRPVRWDCDHVVLLDDETQAIASEIVRHDLFDRVHIGLDFFDASINRIAAWVIGTRNMKKALLRALLEPTAELRKLEAAGDYTARLALLEEQKSLPWQAVWEMYCQRHDTPAGSEWLESVRAYEKEILSQRG.

Mn(2+)-binding residues include histidine 262, aspartate 294, and aspartate 296.

It belongs to the rhamnose isomerase family. As to quaternary structure, homotetramer. Mn(2+) serves as cofactor.

It localises to the cytoplasm. It carries out the reaction L-rhamnopyranose = L-rhamnulose. The protein operates within carbohydrate degradation; L-rhamnose degradation; glycerone phosphate from L-rhamnose: step 1/3. Catalyzes the interconversion of L-rhamnose and L-rhamnulose. This is L-rhamnose isomerase from Shigella boydii serotype 4 (strain Sb227).